The following is a 409-amino-acid chain: uncharacterized protein (409 aa).

The HTH arsR-type domain occupies 305 to 409; the sequence is LTKIDEKVVK…LIGEDDELEM (105 aa).

This is an uncharacterized protein from Methanocaldococcus jannaschii (strain ATCC 43067 / DSM 2661 / JAL-1 / JCM 10045 / NBRC 100440) (Methanococcus jannaschii).